Consider the following 2564-residue polypeptide: Spectrin beta chain, non-erythrocytic 4 (2564 aa).

A disordered region spans residues 1–37; sequence MAQVPGEVDNMEGLPAPNNNPAARWESPDRGWEREQP. An actin-binding region spans residues 1 to 282; the sequence is MAQVPGEVDN…IITYVVSFYH (282 aa). Residues 26 to 36 show a composition bias toward basic and acidic residues; the sequence is ESPDRGWEREQ. Calponin-homology (CH) domains lie at 61–165 and 180–285; these read AVQK…LRFQ and RSAK…HYFS. Spectrin repeat units follow at residues 311–418, 430–533, 536–641, 774–879, 884–982, 1089–1196, 1306–1407, 1412–1512, 1515–1617, 1623–1725, 1728–1830, 1835–1935, 1944–2046, and 2049–2123; these read IERY…AALR, LAQR…RLEQ, ALQK…AELE, ALHQ…WLRD, YRMF…RKEE, RLQR…EALV, ELQH…RQLF, ADQL…RLLL, KELH…QQVL, VEQY…ALEQ, WLYQ…AQLL, ELHK…EDAR, ALRF…WLQQ, and EVHQ…QSKQ. A disordered region spans residues 1853-1872; it reads KRRRLPRLTTPPEPRPSASS. Positions 2208-2225 are enriched in low complexity; it reads PAAPEDAAETPATPAAAE. Disordered regions lie at residues 2208–2439 and 2533–2564; these read PAAP…KSSN and ARWG…GRRK. 3 stretches are compositionally biased toward basic and acidic residues: residues 2227 to 2254, 2268 to 2278, and 2287 to 2318; these read VRPR…RQES, ERQESAEHEAA, and EQME…DLVK. Pro residues predominate over residues 2343-2355; the sequence is PSLPQPRELPPGR. Composition is skewed to basic and acidic residues over residues 2362–2377 and 2424–2435; these read LPER…ARDR and FLLRKRELDANR. The PH domain occupies 2418–2527; sequence TVQHEGFLLR…WLEAVASSVA (110 aa). A compositionally biased stretch (polar residues) spans 2538–2547; it reads TLPTTSSTDE. Positions 2548-2564 are enriched in basic and acidic residues; that stretch reads GNPKREGGDRRASGRRK.

It belongs to the spectrin family. As to expression, expressed in skeletal muscle at the sarcolemma and in the muscle capillaries (at protein level). Abundantly expressed in brain and pancreatic islets.

It is found in the cytoplasm. It localises to the cytoskeleton. The protein resides in the cell cortex. In Homo sapiens (Human), this protein is Spectrin beta chain, non-erythrocytic 4 (SPTBN4).